We begin with the raw amino-acid sequence, 179 residues long: Transcription factor 21 (179 aa).

A disordered region spans residues 20–87; the sequence is CDGLKMDSNK…QVQRNAANAR (68 aa). Residues 33–46 are compositionally biased toward low complexity; the sequence is TSNESTEESSNCEN. Residues 70-80 show a composition bias toward polar residues; it reads SGVSQEGKQVQ. Residues 79-131 form the bHLH domain; the sequence is VQRNAANARERARMRVLSKAFSRLKTTLPWVPPDTKLSKLDTLRLASSYIAHL.

Efficient DNA binding requires dimerization with another bHLH protein. Forms a heterodimer with TCF3 and binds the E box (5'-CANNTG-3').

It is found in the nucleus. Functionally, involved in epithelial-mesenchymal interactions in kidney and lung morphogenesis that include epithelial differentiation and branching morphogenesis. May play a role in the specification or differentiation of one or more subsets of epicardial cell types. The protein is Transcription factor 21 (TCF21) of Homo sapiens (Human).